Here is a 380-residue protein sequence, read N- to C-terminus: Cytochrome b (380 aa).

The next 4 helical transmembrane spans lie at 33 to 53, 77 to 98, 113 to 133, and 178 to 198; these read FGSLLGLCLATQILTGLFLAM, WLIRNIHANGASFFFICIYMHI, WNIGVVLLLLTMMTAFVGYVL, and FFAFHFLFPFVIAAATVLHLL. Heme b is bound by residues His83 and His97. The heme b site is built by His182 and His196. Position 201 (His201) interacts with a ubiquinone. Helical transmembrane passes span 226–246, 288–308, 320–340, and 347–367; these read YKDLLGFVAMLLGLTSLALFA, LGGVLALLFSILVLMVVPILH, LTQFLFWALVADMLILTWIGG, and FIIIGQIASVIYFTIFLVLSP.

The protein belongs to the cytochrome b family. In terms of assembly, the cytochrome bc1 complex contains 3 respiratory subunits (MT-CYB, CYC1 and UQCRFS1), 2 core proteins (UQCRC1 and UQCRC2) and probably 6 low-molecular weight proteins. It depends on heme b as a cofactor.

The protein localises to the mitochondrion inner membrane. Its function is as follows. Component of the ubiquinol-cytochrome c reductase complex (complex III or cytochrome b-c1 complex) that is part of the mitochondrial respiratory chain. The b-c1 complex mediates electron transfer from ubiquinol to cytochrome c. Contributes to the generation of a proton gradient across the mitochondrial membrane that is then used for ATP synthesis. The polypeptide is Cytochrome b (mt-cyb) (Oncorhynchus keta (Chum salmon)).